Consider the following 231-residue polypeptide: Ribonuclease 3 (231 aa).

Residues 3-130 (MHEFFENFGI…VTAAIYLDQT (128 aa)) enclose the RNase III domain. Residue Glu43 participates in Mg(2+) binding. The active site involves Asp47. Mg(2+) contacts are provided by Asp116 and Glu119. Residue Glu119 is part of the active site. The 72-residue stretch at 157–228 (DYKSELQEII…AKDCLNKLKK (72 aa)) folds into the DRBM domain.

Belongs to the ribonuclease III family. In terms of assembly, homodimer. It depends on Mg(2+) as a cofactor.

Its subcellular location is the cytoplasm. The catalysed reaction is Endonucleolytic cleavage to 5'-phosphomonoester.. Digests double-stranded RNA. Involved in the processing of primary rRNA transcript to yield the immediate precursors to the large and small rRNAs (23S and 16S). Processes some mRNAs, and tRNAs when they are encoded in the rRNA operon. Processes pre-crRNA and tracrRNA of type II CRISPR loci if present in the organism. This is Ribonuclease 3 from Mesoplasma florum (strain ATCC 33453 / NBRC 100688 / NCTC 11704 / L1) (Acholeplasma florum).